We begin with the raw amino-acid sequence, 422 residues long: Glucuronoxylanase XynC (422 aa).

The first 32 residues, 1-32 (MIPRIKKTICVLLVCFTMLSVMLGPGATEVLA), serve as a signal peptide directing secretion. Glu-171 (proton donor) is an active-site residue. The active-site Nucleophile is Glu-260.

The protein belongs to the glycosyl hydrolase 30 family.

The protein localises to the secreted. It carries out the reaction Endohydrolysis of (1-&gt;4)-beta-D-xylosyl links in some glucuronoarabinoxylans.. It participates in glycan degradation; xylan degradation. Catalyzes the depolymerization of methylglucuronoxylan (MeGAXn) from different sources. It cleaves the beta-1,4-xylosidic bond penultimate to that linking carbon one of the xylose residue substituted with alpha-1,2-linked 4-O-methyl-D-glucuronate (MeGA). In Bacillus subtilis (strain 168), this protein is Glucuronoxylanase XynC (xynC).